A 395-amino-acid polypeptide reads, in one-letter code: NAD(P)H-quinone oxidoreductase subunit H, chloroplastic (395 aa).

Belongs to the complex I 49 kDa subunit family. NDH is composed of at least 16 different subunits, 5 of which are encoded in the nucleus.

Its subcellular location is the plastid. The protein localises to the chloroplast thylakoid membrane. The catalysed reaction is a plastoquinone + NADH + (n+1) H(+)(in) = a plastoquinol + NAD(+) + n H(+)(out). The enzyme catalyses a plastoquinone + NADPH + (n+1) H(+)(in) = a plastoquinol + NADP(+) + n H(+)(out). In terms of biological role, NDH shuttles electrons from NAD(P)H:plastoquinone, via FMN and iron-sulfur (Fe-S) centers, to quinones in the photosynthetic chain and possibly in a chloroplast respiratory chain. The immediate electron acceptor for the enzyme in this species is believed to be plastoquinone. Couples the redox reaction to proton translocation, and thus conserves the redox energy in a proton gradient. The polypeptide is NAD(P)H-quinone oxidoreductase subunit H, chloroplastic (Coffea arabica (Arabian coffee)).